Here is a 400-residue protein sequence, read N- to C-terminus: Exodeoxyribonuclease 7 large subunit (400 aa).

Belongs to the XseA family. In terms of assembly, heterooligomer composed of large and small subunits.

The protein localises to the cytoplasm. The enzyme catalyses Exonucleolytic cleavage in either 5'- to 3'- or 3'- to 5'-direction to yield nucleoside 5'-phosphates.. In terms of biological role, bidirectionally degrades single-stranded DNA into large acid-insoluble oligonucleotides, which are then degraded further into small acid-soluble oligonucleotides. The chain is Exodeoxyribonuclease 7 large subunit from Clostridium perfringens (strain SM101 / Type A).